Consider the following 298-residue polypeptide: ATP-dependent Clp protease proteolytic subunit 5, chloroplastic (298 aa).

The transit peptide at 1 to 100 (MAHACVSTSA…SSPYFPAYAQ (100 aa)) directs the protein to the chloroplast. Position 101 is an N-acetylglycine (G101). The active-site Nucleophile is S193. H218 is an active-site residue.

It belongs to the peptidase S14 family. Component of the chloroplastic Clp protease core complex which consist of at least 16 proteins: CLPP4 (3 copies), CLPP5 (3 copies), CLPR4 (2 copies), ClpP1 (1 copy), CLPP6 (1 copy), CLPR2 (1 copy), CLPT1 (1 copy), CLPT2 (1 copy) and 3 copies of CLPP3 and/or CLPR1 and/or CLPR3. The core complex is organized in two heptameric rings, one containing CLPP3,4,5,6 in a 1:2:3:1 ratio and the other CLPP1 and CLPR1,2,3,4 in a 3:1:1:1:1 ratio. Interacts with CHIP. Ubiquitinated in vitro by CHIP. In terms of tissue distribution, mostly expressed in leaves. Also detected in stems, and to a lower extent, in roots (at protein level).

It localises to the plastid. The protein resides in the chloroplast stroma. The catalysed reaction is Hydrolysis of proteins to small peptides in the presence of ATP and magnesium. alpha-casein is the usual test substrate. In the absence of ATP, only oligopeptides shorter than five residues are hydrolyzed (such as succinyl-Leu-Tyr-|-NHMec, and Leu-Tyr-Leu-|-Tyr-Trp, in which cleavage of the -Tyr-|-Leu- and -Tyr-|-Trp bonds also occurs).. In terms of biological role, cleaves peptides in various proteins in a process that requires ATP hydrolysis. Has a chymotrypsin-like activity. Plays a major role in the degradation of misfolded proteins. The protein is ATP-dependent Clp protease proteolytic subunit 5, chloroplastic of Arabidopsis thaliana (Mouse-ear cress).